The sequence spans 445 residues: 26S proteasome regulatory subunit RPN5 (445 aa).

An N-acetylserine modification is found at S2. Positions 233-407 (EYLEVAQYLQ…KIVNFEKPKN (175 aa)) constitute a PCI domain.

This sequence belongs to the proteasome subunit p55 family. N-acetylated by NAT1.

Functionally, acts as a regulatory subunit of the 26S proteasome which is involved in the ATP-dependent degradation of ubiquitinated proteins. This is 26S proteasome regulatory subunit RPN5 (RPN5) from Saccharomyces cerevisiae (strain ATCC 204508 / S288c) (Baker's yeast).